The chain runs to 338 residues: Phosphoribosylformylglycinamidine cyclo-ligase (338 aa).

It belongs to the AIR synthase family.

Its subcellular location is the cytoplasm. It catalyses the reaction 2-formamido-N(1)-(5-O-phospho-beta-D-ribosyl)acetamidine + ATP = 5-amino-1-(5-phospho-beta-D-ribosyl)imidazole + ADP + phosphate + H(+). The protein operates within purine metabolism; IMP biosynthesis via de novo pathway; 5-amino-1-(5-phospho-D-ribosyl)imidazole from N(2)-formyl-N(1)-(5-phospho-D-ribosyl)glycinamide: step 2/2. This Thermoplasma volcanium (strain ATCC 51530 / DSM 4299 / JCM 9571 / NBRC 15438 / GSS1) protein is Phosphoribosylformylglycinamidine cyclo-ligase.